Here is a 988-residue protein sequence, read N- to C-terminus: Ephrin type-B receptor 3 (988 aa).

Positions 1–24 (GVSSRARRPPGSSRSSRRGVTSEL) are disordered. Topologically, residues 1–534 (GVSSRARRPP…TSKTFQELPL (534 aa)) are extracellular. The Eph LBD domain occupies 11–189 (GSSRSSRRGV…FYKKCSNTIA (179 aa)). C53 and C171 are oxidised to a cystine. 2 Fibronectin type-III domains span residues 311 to 424 (VPSA…TNQA) and 425 to 522 (APSA…TAED). N-linked (GlcNAc...) asparagine glycosylation is found at N323 and N418. The helical transmembrane segment at 535 to 555 (IVGSATAGLLFVIVVVIIAIV) threads the bilayer. The Cytoplasmic segment spans residues 556–988 (CFRKGMVTEQ…QMNQTLPVQV (433 aa)). Y604 carries the post-translational modification Phosphotyrosine; by autocatalysis. The Protein kinase domain maps to 623-886 (VKIEEVIGAG…QIVNTLDKLI (264 aa)). ATP contacts are provided by residues 629–637 (IGAGEFGEV) and K655. D748 acts as the Proton acceptor in catalysis. An SAM domain is found at 915–979 (TTFTTVGDWL…LSSIQDMRLQ (65 aa)). The PDZ-binding signature appears at 986-988 (VQV).

This sequence belongs to the protein kinase superfamily. Tyr protein kinase family. Ephrin receptor subfamily. As to quaternary structure, heterotetramer upon binding of the ligand. The heterotetramer is composed of an ephrin dimer and a receptor dimer. Oligomerization is probably required to induce biological responses. In terms of processing, phosphorylated. Autophosphorylates upon ligand-binding. Autophosphorylation on Tyr-604 is required for interaction with SH2 domain-containing proteins. In terms of tissue distribution, present in 10-day embryonic brain and body tissues. Prominent expression in kidney. Lower expression in lung, and barely detectable in brain, liver, heart, skeletal muscle and thymus.

The protein localises to the cell membrane. It localises to the cell projection. The protein resides in the dendrite. It carries out the reaction L-tyrosyl-[protein] + ATP = O-phospho-L-tyrosyl-[protein] + ADP + H(+). Functionally, receptor tyrosine kinase which binds promiscuously transmembrane ephrin-B family ligands residing on adjacent cells, leading to contact-dependent bidirectional signaling into neighboring cells. The signaling pathway downstream of the receptor is referred to as forward signaling while the signaling pathway downstream of the ephrin ligand is referred to as reverse signaling. Generally has an overlapping and redundant function with EPHB2. Like EPHB2, functions in axon guidance during development. In addition to its role in axon guidance also plays an important redundant role with other ephrin-B receptors in development and maturation of dendritic spines and the formation of excitatory synapses. May control other aspects of development through regulation of cell migration and positioning. The polypeptide is Ephrin type-B receptor 3 (EPHB3) (Gallus gallus (Chicken)).